A 402-amino-acid polypeptide reads, in one-letter code: Zinc finger protein 586 (402 aa).

Positions 15–87 constitute a KRAB domain; that stretch reads VTFEDVAVNF…DQGGHSGERP (73 aa). The C2H2-type 1; degenerate zinc-finger motif lies at 88–116; the sequence is YECGEYRKLFKNKSCLTEPRRDHKHRNVR. A C2H2-type 2; degenerate zinc finger spans residues 122–144; it reads YECSKYGKLFHQKPTLHIHERFH. The C2H2-type 3; degenerate zinc finger occupies 150-172; sequence YECSECGKSFHQSSSLLQRQTLH. 8 consecutive C2H2-type zinc fingers follow at residues 178-200, 206-228, 234-256, 262-284, 290-312, 317-339, 345-367, and 373-395; these read YECIECGKAFAEKSSLINHRKVH, YECNECGKSFAYTSSLIKHRRIH, YECSECGRSFAENSSLIKHLRVH, YECVECGKSFRRSSSLLQHQRVH, YECSECGKSFSLRSNLIHHQRVH, HECGQCGKSFSRKSSLIIHLRVH, YECSDCGKSFAENSSLIKHLRVH, and YECIDCGKSFRHSSSFRRHQRVH.

This sequence belongs to the krueppel C2H2-type zinc-finger protein family.

It localises to the nucleus. May be involved in transcriptional regulation. This Homo sapiens (Human) protein is Zinc finger protein 586 (ZNF586).